Here is a 350-residue protein sequence, read N- to C-terminus: tRNA uridine(34) hydroxylase (350 aa).

Positions 146–240 (DDPDALFIDM…YARKAREQGL (95 aa)) constitute a Rhodanese domain. The active-site Cysteine persulfide intermediate is the Cys-200.

The protein belongs to the TrhO family.

The enzyme catalyses uridine(34) in tRNA + AH2 + O2 = 5-hydroxyuridine(34) in tRNA + A + H2O. Catalyzes oxygen-dependent 5-hydroxyuridine (ho5U) modification at position 34 in tRNAs, the first step in 5-carboxymethoxyuridine (cmo5U) biosynthesis. May be part of an alternate pathway, which is able to bypass cmo5U biogenesis in a subset of tRNAs under aerobic conditions. This chain is tRNA uridine(34) hydroxylase, found in Escherichia coli O45:K1 (strain S88 / ExPEC).